Consider the following 391-residue polypeptide: MASGDDLKRRLTILGSTGSIGTSTLDVIERLGGRDRFEIAALTGNGNIPLLAEQARRIGAELAVTADEDRYGELKDALSGSGIEVAAGRSGLTEAAERDAGWVMAAIVGNAGLGPTLAAARRGADIALANKECLVSAGSLFIDAVAEGGGRLLPVDSEHNAIFQVLENDQRHAVERIVLTASGGPFRTKTLDEMRHVTADVARAHPNWSMGLKISIDSASMFNKALEMIEARHLFRLRPEQIEVIVHPQSVVHSMVGYTDGSVLAQLGCPDMRTAIGYALSYPKRCDLPVERLDFARLARLDFEAPDEVRFPAIKLARRAMEEGGVQGAVLNGAKETALDAFIKGRIGFLAMAEIVEKVMDGLAGLPAATSMDDVFAADERARRAAAEMIR.

Residues Thr17, Gly18, Ser19, Ile20, Asn47, and Asn130 each contribute to the NADPH site. Lys131 contributes to the 1-deoxy-D-xylulose 5-phosphate binding site. Position 132 (Glu132) interacts with NADPH. Asp156 is a binding site for Mn(2+). 1-deoxy-D-xylulose 5-phosphate contacts are provided by Ser157, Glu158, Ser182, and His205. Glu158 contacts Mn(2+). Gly211 provides a ligand contact to NADPH. 4 residues coordinate 1-deoxy-D-xylulose 5-phosphate: Ser218, Asn223, Lys224, and Glu227. Glu227 contacts Mn(2+).

The protein belongs to the DXR family. Mg(2+) is required as a cofactor. Requires Mn(2+) as cofactor.

It catalyses the reaction 2-C-methyl-D-erythritol 4-phosphate + NADP(+) = 1-deoxy-D-xylulose 5-phosphate + NADPH + H(+). It functions in the pathway isoprenoid biosynthesis; isopentenyl diphosphate biosynthesis via DXP pathway; isopentenyl diphosphate from 1-deoxy-D-xylulose 5-phosphate: step 1/6. Its function is as follows. Catalyzes the NADPH-dependent rearrangement and reduction of 1-deoxy-D-xylulose-5-phosphate (DXP) to 2-C-methyl-D-erythritol 4-phosphate (MEP). The sequence is that of 1-deoxy-D-xylulose 5-phosphate reductoisomerase from Rhizobium meliloti (strain 1021) (Ensifer meliloti).